The chain runs to 905 residues: Cation-transporting ATPase pma1 (905 aa).

4 helical membrane-spanning segments follow: residues 60–80 (FLLQFHQPLLYILLIAGTVKA), 81–101 (FLGSWTNAWVIWGVTLVNAII), 248–268 (FSHTLLYVIVTLAAFTFAVGW), and 283–303 (ALAVSAIPEGLPAVVTVTLAI). Asp-333 (4-aspartylphosphate intermediate) is an active-site residue. The next 5 membrane-spanning stretches (helical) occupy residues 716–736 (ILISVLLALNLPILSLQVLWL), 774–794 (LLHRILLVSLFNWILIFGMFE), 809–829 (MAIQALVAARVIYLLSISQLG), 848–868 (ILLLGIAVAIALQIGFSQLPF), and 880–900 (WQQWAICLLPMIPMVPVAILA).

Belongs to the cation transport ATPase (P-type) (TC 3.A.3) family. Type IIA subfamily.

It is found in the cell membrane. It carries out the reaction ATP + H2O = ADP + phosphate + H(+). Could mediate calcium influx. The chain is Cation-transporting ATPase pma1 (pma1) from Synechocystis sp. (strain ATCC 27184 / PCC 6803 / Kazusa).